The following is a 122-amino-acid chain: Large ribosomal subunit protein uL14c (122 aa).

The protein belongs to the universal ribosomal protein uL14 family. Part of the 50S ribosomal subunit.

Its subcellular location is the plastid. In terms of biological role, binds to 23S rRNA. The protein is Large ribosomal subunit protein uL14c of Cuscuta obtusiflora (Peruvian dodder).